The sequence spans 325 residues: Pyruvate dehydrogenase E1 component subunit beta (325 aa).

Glu59 is a binding site for thiamine diphosphate.

In terms of assembly, heterodimer of an alpha and a beta chain. Thiamine diphosphate is required as a cofactor.

It catalyses the reaction N(6)-[(R)-lipoyl]-L-lysyl-[protein] + pyruvate + H(+) = N(6)-[(R)-S(8)-acetyldihydrolipoyl]-L-lysyl-[protein] + CO2. In terms of biological role, the pyruvate dehydrogenase complex catalyzes the overall conversion of pyruvate to acetyl-CoA and CO(2). It contains multiple copies of three enzymatic components: pyruvate dehydrogenase (E1), dihydrolipoamide acetyltransferase (E2) and lipoamide dehydrogenase (E3). In Rickettsia bellii (strain RML369-C), this protein is Pyruvate dehydrogenase E1 component subunit beta (pdhB).